We begin with the raw amino-acid sequence, 171 residues long: MSSKRTKTKTKKRPQRATSNVFAMFDQSQIQEFKEAFNMIDQNRDGFIDKEDLHDMLASLGKNPTDEYLDAMMNEAPGPINFTMFLTMFGEKLNGTDPEDVIRNAFACFDEEATGTIQEDYLRELLTTMGDRFTDEEVDELYREAPIDKKGNFNYIEFTRILKHGAKDKDD.

Position 18 is a phosphothreonine; by MLCK (T18). S19 is modified (phosphoserine; by MLCK). 3 consecutive EF-hand domains span residues 28 to 63, 97 to 132, and 133 to 168; these read SQIQ…LGKN, DPED…MGDR, and FTDE…GAKD. D41, N43, D45, and D52 together coordinate Ca(2+).

As to quaternary structure, myosin is a hexamer of 2 heavy chains and 4 light chains. Phosphorylation increases the actin-activated myosin ATPase activity and thereby regulates the contractile activity. It is required to generate the driving force in the migration of the cells but not necessary for localization of myosin-2 at the leading edge.

Its function is as follows. Myosin regulatory subunit that plays an important role in regulation of both smooth muscle and nonmuscle cell contractile activity via its phosphorylation. Implicated in cytokinesis, receptor capping, and cell locomotion. The polypeptide is Myosin regulatory light chain 12A (MYL12A) (Homo sapiens (Human)).